A 258-amino-acid polypeptide reads, in one-letter code: Caffeoyl-CoA O-methyltransferase 1 (258 aa).

Residues 1-16 (MATTATEAAPAQEQQA) show a composition bias toward low complexity. Residues 1-31 (MATTATEAAPAQEQQANGNGEQKTRHSEVGH) form a disordered region. Over residues 22 to 31 (QKTRHSEVGH) the composition is skewed to basic and acidic residues. Residue K32 coordinates substrate. Residues T74, E96, 98 to 99 (GV), S104, D122, and A151 each bind S-adenosyl-L-methionine. D174 is a substrate binding site. D174 is a binding site for a divalent metal cation. D176 is an S-adenosyl-L-methionine binding site. Residues D200 and N201 each coordinate a divalent metal cation. Residue N205 participates in substrate binding.

It belongs to the class I-like SAM-binding methyltransferase superfamily. Cation-dependent O-methyltransferase family. CCoAMT subfamily. Requires a divalent metal cation as cofactor.

It catalyses the reaction (E)-caffeoyl-CoA + S-adenosyl-L-methionine = (E)-feruloyl-CoA + S-adenosyl-L-homocysteine + H(+). It participates in aromatic compound metabolism; phenylpropanoid biosynthesis. Functionally, methylates caffeoyl-CoA to feruloyl-CoA and 5-hydroxyferuloyl-CoA to sinapoyl-CoA. Plays a role in the synthesis of feruloylated polysaccharides. Involved in the reinforcement of the plant cell wall. Also involved in the responding to wounding or pathogen challenge by the increased formation of cell wall-bound ferulic acid polymers. The chain is Caffeoyl-CoA O-methyltransferase 1 (CCOAOMT1) from Zea mays (Maize).